The chain runs to 142 residues: Nucleoside diphosphate kinase (142 aa).

Lys-11, Phe-59, Arg-87, Thr-93, Arg-104, and Asn-114 together coordinate ATP. Catalysis depends on His-117, which acts as the Pros-phosphohistidine intermediate.

This sequence belongs to the NDK family. As to quaternary structure, homotetramer. Requires Mg(2+) as cofactor.

The protein resides in the cytoplasm. It catalyses the reaction a 2'-deoxyribonucleoside 5'-diphosphate + ATP = a 2'-deoxyribonucleoside 5'-triphosphate + ADP. It carries out the reaction a ribonucleoside 5'-diphosphate + ATP = a ribonucleoside 5'-triphosphate + ADP. In terms of biological role, major role in the synthesis of nucleoside triphosphates other than ATP. The ATP gamma phosphate is transferred to the NDP beta phosphate via a ping-pong mechanism, using a phosphorylated active-site intermediate. This chain is Nucleoside diphosphate kinase, found in Yersinia pseudotuberculosis serotype O:1b (strain IP 31758).